The primary structure comprises 539 residues: Glucose-6-phosphate isomerase (539 aa).

Catalysis depends on Glu-353, which acts as the Proton donor. Active-site residues include His-384 and Lys-505.

It belongs to the GPI family.

The protein resides in the cytoplasm. The catalysed reaction is alpha-D-glucose 6-phosphate = beta-D-fructose 6-phosphate. The protein operates within carbohydrate biosynthesis; gluconeogenesis. It participates in carbohydrate degradation; glycolysis; D-glyceraldehyde 3-phosphate and glycerone phosphate from D-glucose: step 2/4. Catalyzes the reversible isomerization of glucose-6-phosphate to fructose-6-phosphate. This chain is Glucose-6-phosphate isomerase, found in Ralstonia nicotianae (strain ATCC BAA-1114 / GMI1000) (Ralstonia solanacearum).